Here is a 123-residue protein sequence, read N- to C-terminus: Small ribosomal subunit protein uS12 (123 aa).

Residue D89 is modified to 3-methylthioaspartic acid. Residues 103–123 (DTSGVQDRRQGRSKYGAKRPK) form a disordered region. Positions 113 to 123 (GRSKYGAKRPK) are enriched in basic residues.

Belongs to the universal ribosomal protein uS12 family. Part of the 30S ribosomal subunit. Contacts proteins S8 and S17. May interact with IF1 in the 30S initiation complex.

In terms of biological role, with S4 and S5 plays an important role in translational accuracy. Interacts with and stabilizes bases of the 16S rRNA that are involved in tRNA selection in the A site and with the mRNA backbone. Located at the interface of the 30S and 50S subunits, it traverses the body of the 30S subunit contacting proteins on the other side and probably holding the rRNA structure together. The combined cluster of proteins S8, S12 and S17 appears to hold together the shoulder and platform of the 30S subunit. The sequence is that of Small ribosomal subunit protein uS12 from Nitratidesulfovibrio vulgaris (strain ATCC 29579 / DSM 644 / CCUG 34227 / NCIMB 8303 / VKM B-1760 / Hildenborough) (Desulfovibrio vulgaris).